The primary structure comprises 517 residues: Bifunctional purine biosynthesis protein PurH (517 aa).

Residues methionine 1–valine 145 form the MGS-like domain.

It belongs to the PurH family.

The enzyme catalyses (6R)-10-formyltetrahydrofolate + 5-amino-1-(5-phospho-beta-D-ribosyl)imidazole-4-carboxamide = 5-formamido-1-(5-phospho-D-ribosyl)imidazole-4-carboxamide + (6S)-5,6,7,8-tetrahydrofolate. It carries out the reaction IMP + H2O = 5-formamido-1-(5-phospho-D-ribosyl)imidazole-4-carboxamide. It participates in purine metabolism; IMP biosynthesis via de novo pathway; 5-formamido-1-(5-phospho-D-ribosyl)imidazole-4-carboxamide from 5-amino-1-(5-phospho-D-ribosyl)imidazole-4-carboxamide (10-formyl THF route): step 1/1. The protein operates within purine metabolism; IMP biosynthesis via de novo pathway; IMP from 5-formamido-1-(5-phospho-D-ribosyl)imidazole-4-carboxamide: step 1/1. This chain is Bifunctional purine biosynthesis protein PurH, found in Prochlorococcus marinus (strain MIT 9301).